An 892-amino-acid chain; its full sequence is Alpha-actinin-1 (892 aa).

Methionine 1 carries the N-acetylmethionine modification. Positions 1–247 (MDHYDSQQTN…IMTYVSSFYH (247 aa)) are actin-binding. A Phosphoserine modification is found at serine 6. Position 12 is a phosphotyrosine; by FAK1 (tyrosine 12). 2 consecutive Calponin-homology (CH) domains span residues 31–135 (KQQR…LRFA) and 144–250 (TSAK…HAFS). N6-acetyllysine occurs at positions 95 and 195. 4 Spectrin repeats span residues 274–384 (QLME…WLLN), 394–499 (HLAE…ALER), 509–620 (QLYL…ALTE), and 630–733 (RLRK…EVEN). An interaction with DDN region spans residues 274-733 (QLMEDYEKLA…IARTINEVEN (460 aa)). Serine 471 is subject to Phosphoserine. Lysine 676 carries the post-translational modification N6-acetyllysine. At serine 677 the chain carries Phosphoserine. 2 consecutive EF-hand domains span residues 746 to 781 (EQMNEFRASFNHFDRDHSGTLGPEEFKACLISLGYD) and 787 to 822 (QGEAEFARIMSIVDPNRLGVVTFQAFIDFMSRETAD). Ca(2+) is bound by residues aspartate 759, aspartate 761, serine 763, threonine 765, and glutamate 770. Serine 890 is modified (phosphoserine).

The protein belongs to the alpha-actinin family. In terms of assembly, homodimer; antiparallel. Interacts with MYOZ2, TTID and LPP. Interacts with DDN. Interacts with PSD. Interacts with MICALL2. Interacts with DNM2 and CTTN. Interacts with PDLIM1. Interacts with PDLIM2. Interacts with PDLIM4 (via PDZ domain). Interacts with IGSF8.

Its subcellular location is the cytoplasm. It is found in the cytoskeleton. It localises to the myofibril. The protein localises to the sarcomere. The protein resides in the z line. Its subcellular location is the cell membrane. It is found in the cell junction. It localises to the cell projection. The protein localises to the ruffle. F-actin cross-linking protein which is thought to anchor actin to a variety of intracellular structures. Association with IGSF8 regulates the immune synapse formation and is required for efficient T-cell activation. This chain is Alpha-actinin-1 (ACTN1), found in Macaca fascicularis (Crab-eating macaque).